Reading from the N-terminus, the 213-residue chain is Ras-related protein Rab-4B (213 aa).

Residue Ala-2 is modified to N-acetylalanine. Positions 18, 19, 20, 21, 22, and 23 each coordinate GDP. GTP is bound by residues Gly-18, Thr-19, Gly-20, Lys-21, Ser-22, Cys-23, Ser-37, His-39, and Thr-40. A Mg(2+)-binding site is contributed by Ser-22. The short motif at His-39–Glu-44 is the Switch 1 element. Positions 40 and 63 each coordinate Mg(2+). A Switch 2 motif is present at residues Ala-65–Thr-74. Residue Gly-66 participates in GTP binding. Gln-67 carries the post-translational modification 5-glutamyl serotonin. GDP is bound by residues Asn-121, Lys-122, Asp-124, Ala-152, and Leu-153. Residues Asn-121, Lys-122, Asp-124, Ala-152, and Leu-153 each contribute to the GTP site. 2 positions are modified to phosphoserine: Ser-185 and Ser-193. 2 S-geranylgeranyl cysteine lipidation sites follow: Cys-211 and Cys-213. The residue at position 213 (Cys-213) is a Cysteine methyl ester.

It belongs to the small GTPase superfamily. Rab family. Interacts (GTP-bound form) with RUFY1; the interaction allows endosomal tethering and fusion. Mg(2+) serves as cofactor. Post-translationally, serotonylation of Gln-67 by TGM2 during activation and aggregation of platelets leads to constitutive activation of GTPase activity.

It is found in the cell membrane. The protein localises to the early endosome membrane. The catalysed reaction is GTP + H2O = GDP + phosphate + H(+). Regulated by guanine nucleotide exchange factors (GEFs) which promote the exchange of bound GDP for free GTP. Regulated by GTPase activating proteins (GAPs) which increase the GTP hydrolysis activity. Inhibited by GDP dissociation inhibitors (GDIs). The small GTPases Rab are key regulators of intracellular membrane trafficking, from the formation of transport vesicles to their fusion with membranes. Rabs cycle between an inactive GDP-bound form and an active GTP-bound form that is able to recruit to membranes different set of downstream effectors directly responsible for vesicle formation, movement, tethering and fusion. RAB4B mediates endosomal tethering and fusion through the interaction with RUFY1 and RAB14. Acts as a regulator of platelet alpha-granule release during activation and aggregation of platelets. In Mus musculus (Mouse), this protein is Ras-related protein Rab-4B.